The sequence spans 245 residues: tRNA (guanine-N(1)-)-methyltransferase (245 aa).

S-adenosyl-L-methionine is bound by residues Gly113 and 133 to 138; that span reads IGDYVL.

This sequence belongs to the RNA methyltransferase TrmD family. In terms of assembly, homodimer.

It localises to the cytoplasm. The enzyme catalyses guanosine(37) in tRNA + S-adenosyl-L-methionine = N(1)-methylguanosine(37) in tRNA + S-adenosyl-L-homocysteine + H(+). In terms of biological role, specifically methylates guanosine-37 in various tRNAs. The polypeptide is tRNA (guanine-N(1)-)-methyltransferase (Actinobacillus succinogenes (strain ATCC 55618 / DSM 22257 / CCUG 43843 / 130Z)).